The sequence spans 163 residues: Crossover junction endodeoxyribonuclease RuvC (163 aa).

Active-site residues include Asp7, Glu67, and Asp140. Mg(2+) is bound by residues Asp7, Glu67, and Asp140.

The protein belongs to the RuvC family. In terms of assembly, homodimer which binds Holliday junction (HJ) DNA. The HJ becomes 2-fold symmetrical on binding to RuvC with unstacked arms; it has a different conformation from HJ DNA in complex with RuvA. In the full resolvosome a probable DNA-RuvA(4)-RuvB(12)-RuvC(2) complex forms which resolves the HJ. The cofactor is Mg(2+).

Its subcellular location is the cytoplasm. It carries out the reaction Endonucleolytic cleavage at a junction such as a reciprocal single-stranded crossover between two homologous DNA duplexes (Holliday junction).. Its function is as follows. The RuvA-RuvB-RuvC complex processes Holliday junction (HJ) DNA during genetic recombination and DNA repair. Endonuclease that resolves HJ intermediates. Cleaves cruciform DNA by making single-stranded nicks across the HJ at symmetrical positions within the homologous arms, yielding a 5'-phosphate and a 3'-hydroxyl group; requires a central core of homology in the junction. The consensus cleavage sequence is 5'-(A/T)TT(C/G)-3'. Cleavage occurs on the 3'-side of the TT dinucleotide at the point of strand exchange. HJ branch migration catalyzed by RuvA-RuvB allows RuvC to scan DNA until it finds its consensus sequence, where it cleaves and resolves the cruciform DNA. This chain is Crossover junction endodeoxyribonuclease RuvC, found in Desulforamulus reducens (strain ATCC BAA-1160 / DSM 100696 / MI-1) (Desulfotomaculum reducens).